A 287-amino-acid chain; its full sequence is MKNVLSIQSHVVFGHAGNGASEFPMRRLGVNVWPLNTVQFSNHTQYGHWEGSAIDASQMLALVEGIGAIGMLPRCDAVLSGYLGTPEQAQAVIEIVRAVKAANPHALYFCDPVMGTATGYRVEPGIQEFLVRTMPEVSDVMCPNHSELQRLVGREIETVEEAVAACRELMKRGPKMVLVKHLLDRNSLADRFNMLVVTGREAWMGQRPLYPFARQPVGVGDMTSAVFVARTLLGDSVRSAFEHTLAAVNAVVRATWDAGRYELEIVAAQDDIARPRDWFDAWVVDPA.

Substrate-binding positions include Ser-9 and 44-45 (TQ). Asp-111, Glu-147, and Lys-180 together coordinate ATP. Position 221 (Asp-221) interacts with substrate.

It belongs to the pyridoxine kinase family. PdxY subfamily. In terms of assembly, homodimer. Mg(2+) is required as a cofactor.

The catalysed reaction is pyridoxal + ATP = pyridoxal 5'-phosphate + ADP + H(+). Its pathway is cofactor metabolism; pyridoxal 5'-phosphate salvage; pyridoxal 5'-phosphate from pyridoxal: step 1/1. In terms of biological role, pyridoxal kinase involved in the salvage pathway of pyridoxal 5'-phosphate (PLP). Catalyzes the phosphorylation of pyridoxal to PLP. This chain is Pyridoxal kinase PdxY, found in Paraburkholderia phymatum (strain DSM 17167 / CIP 108236 / LMG 21445 / STM815) (Burkholderia phymatum).